Consider the following 688-residue polypeptide: MTARRILVTSALPYANGQIHIGHLVEYIQTDIWVRFQRMMGNEVYYVGADDTHGTPVMLRAEKEGITPKQLIDRVWTEHKRDFDSFLVSFDNYYSTDAEENRELCEKIYLALKADDLIAEREVEQFYDPVKNMFLPDRFIKGECPKCGAKDQYGDSCEVCGTTYVPTDLKNPYSVVSGATPVRKSSTHFFFKLSDPRCETFLREWVADLAQPEAANKMQEWLGSEGEASTLSDWDISRDAPYFGFEIPGAPGKYFYVWLDAPIGYYASFKNLAEKKGIDFDAWVGPHSTAEQYHFIGKDILYFHTLFWPAMLRFSGYRTPTNVFAHGFLTVDGAKMSKSRGTFITAQSYIDTGMNPEWLRYYFAAKLNASMEDLDLNLDDFIARVNSDLIGKYVNIASRAAGFLVKRFEGKVDEAALAHPLLKQLREAAPQVAQLYEAREYSKALRLVMELTDTVNAFVDTEKPWELAKDEAKRSALHAACSVSLEAFRLLTVYLKPVVPTVAAGVERFLNVEPLDWRAIDKQLSASSPVQAYQHLMTRVDAKQVDALLAANRESLQATAPAAGAAAAASIEPIADTITIDDFAKIDLRVAKIVECQKVEGSSKLLQLTLDLGEGRTRNVFSGIQSAYTPEQLVGKLTVVVANLAPRKMKFGVSEGMVLAASAADEKANPGLYILEPHSGAVPGMRIG.

The 'HIGH' region motif lies at 13–23; that stretch reads PYANGQIHIGH. Zn(2+) contacts are provided by C144, C147, C157, and C160. Residues 335 to 339 carry the 'KMSKS' region motif; sequence KMSKS. Position 338 (K338) interacts with ATP. A tRNA-binding domain is found at 582-688; that stretch reads DFAKIDLRVA…SGAVPGMRIG (107 aa).

It belongs to the class-I aminoacyl-tRNA synthetase family. MetG type 1 subfamily. In terms of assembly, homodimer. Zn(2+) is required as a cofactor.

It is found in the cytoplasm. It carries out the reaction tRNA(Met) + L-methionine + ATP = L-methionyl-tRNA(Met) + AMP + diphosphate. Its function is as follows. Is required not only for elongation of protein synthesis but also for the initiation of all mRNA translation through initiator tRNA(fMet) aminoacylation. This Cupriavidus pinatubonensis (strain JMP 134 / LMG 1197) (Cupriavidus necator (strain JMP 134)) protein is Methionine--tRNA ligase.